A 466-amino-acid polypeptide reads, in one-letter code: UDP-N-acetylmuramoylalanine--D-glutamate ligase (466 aa).

127–133 (GSNGKST) is a binding site for ATP.

This sequence belongs to the MurCDEF family.

It localises to the cytoplasm. The catalysed reaction is UDP-N-acetyl-alpha-D-muramoyl-L-alanine + D-glutamate + ATP = UDP-N-acetyl-alpha-D-muramoyl-L-alanyl-D-glutamate + ADP + phosphate + H(+). It functions in the pathway cell wall biogenesis; peptidoglycan biosynthesis. Cell wall formation. Catalyzes the addition of glutamate to the nucleotide precursor UDP-N-acetylmuramoyl-L-alanine (UMA). This is UDP-N-acetylmuramoylalanine--D-glutamate ligase from Ruegeria pomeroyi (strain ATCC 700808 / DSM 15171 / DSS-3) (Silicibacter pomeroyi).